The sequence spans 425 residues: Dihydroorotase (425 aa).

2 residues coordinate Zn(2+): histidine 56 and histidine 58. Substrate is bound by residues 58–60 (HYR) and asparagine 90. Aspartate 148, histidine 175, and histidine 228 together coordinate Zn(2+). Asparagine 274 is a binding site for substrate. Zn(2+) is bound at residue aspartate 301. Aspartate 301 is an active-site residue. Substrate contacts are provided by residues histidine 305 and 319–320 (FG).

This sequence belongs to the metallo-dependent hydrolases superfamily. DHOase family. Class I DHOase subfamily. Requires Zn(2+) as cofactor.

It carries out the reaction (S)-dihydroorotate + H2O = N-carbamoyl-L-aspartate + H(+). Its pathway is pyrimidine metabolism; UMP biosynthesis via de novo pathway; (S)-dihydroorotate from bicarbonate: step 3/3. Functionally, catalyzes the reversible cyclization of carbamoyl aspartate to dihydroorotate. The sequence is that of Dihydroorotase from Lactobacillus gasseri (strain ATCC 33323 / DSM 20243 / BCRC 14619 / CIP 102991 / JCM 1131 / KCTC 3163 / NCIMB 11718 / NCTC 13722 / AM63).